Consider the following 263-residue polypeptide: L-aspartate dehydrogenase (263 aa).

NAD(+) contacts are provided by Ala-120 and Asn-186. Residue His-216 is part of the active site.

This sequence belongs to the L-aspartate dehydrogenase family.

The enzyme catalyses L-aspartate + NADP(+) + H2O = oxaloacetate + NH4(+) + NADPH + H(+). The catalysed reaction is L-aspartate + NAD(+) + H2O = oxaloacetate + NH4(+) + NADH + H(+). It participates in cofactor biosynthesis; NAD(+) biosynthesis; iminoaspartate from L-aspartate (dehydrogenase route): step 1/1. Specifically catalyzes the NAD or NADP-dependent dehydrogenation of L-aspartate to iminoaspartate. This chain is L-aspartate dehydrogenase, found in Psychrobacter cryohalolentis (strain ATCC BAA-1226 / DSM 17306 / VKM B-2378 / K5).